Reading from the N-terminus, the 872-residue chain is Leucine--tRNA ligase (872 aa).

The short motif at 42–52 (PYPSGSLHMGH) is the 'HIGH' region element. The short motif at 634-638 (TMSKS) is the 'KMSKS' region element. Lys637 serves as a coordination point for ATP.

It belongs to the class-I aminoacyl-tRNA synthetase family.

Its subcellular location is the cytoplasm. It catalyses the reaction tRNA(Leu) + L-leucine + ATP = L-leucyl-tRNA(Leu) + AMP + diphosphate. This chain is Leucine--tRNA ligase, found in Trichormus variabilis (strain ATCC 29413 / PCC 7937) (Anabaena variabilis).